The sequence spans 420 residues: Subtilisin-like protease 7 (420 aa).

The first 20 residues, 1 to 20 (MGFITKAIPLALAAASVING), serve as a signal peptide directing secretion. A propeptide spanning residues 21-119 (AEIMETRAGV…IERDARVQIN (99 aa)) is cleaved from the precursor. Positions 36 to 118 (KYIVVMNDGM…YIERDARVQI (83 aa)) constitute an Inhibitor I9 domain. The Peptidase S8 domain occupies 129-413 (SWGLARVGSK…SFPLNIYEEQ (285 aa)). Active-site charge relay system residues include D161 and H192. N222 and N252 each carry an N-linked (GlcNAc...) asparagine glycan. Residue S346 is the Charge relay system of the active site. N-linked (GlcNAc...) asparagine glycosylation occurs at N396.

The protein belongs to the peptidase S8 family.

It is found in the secreted. In terms of biological role, secreted subtilisin-like serine protease with keratinolytic activity that contributes to pathogenicity. This Arthroderma benhamiae (strain ATCC MYA-4681 / CBS 112371) (Trichophyton mentagrophytes) protein is Subtilisin-like protease 7 (SUB7).